Reading from the N-terminus, the 495-residue chain is Glycerol kinase (495 aa).

Threonine 11 is a binding site for ADP. Residues threonine 11, threonine 12, and serine 13 each contribute to the ATP site. Position 11 (threonine 11) interacts with sn-glycerol 3-phosphate. Sn-glycerol 3-phosphate contacts are provided by arginine 81, glutamate 82, tyrosine 133, and aspartate 242. Glycerol-binding residues include arginine 81, glutamate 82, tyrosine 133, aspartate 242, and glutamine 243. The ADP site is built by threonine 264, glycine 307, glycine 407, and asparagine 411. ATP contacts are provided by threonine 264, glycine 307, and glycine 407.

This sequence belongs to the FGGY kinase family.

It carries out the reaction glycerol + ATP = sn-glycerol 3-phosphate + ADP + H(+). It functions in the pathway polyol metabolism; glycerol degradation via glycerol kinase pathway; sn-glycerol 3-phosphate from glycerol: step 1/1. Inhibited by fructose 1,6-bisphosphate (FBP). Key enzyme in the regulation of glycerol uptake and metabolism. Catalyzes the phosphorylation of glycerol to yield sn-glycerol 3-phosphate. This Thermus brockianus protein is Glycerol kinase.